The primary structure comprises 494 residues: Histidine--tRNA ligase (494 aa).

Belongs to the class-II aminoacyl-tRNA synthetase family. As to quaternary structure, homodimer.

It is found in the cytoplasm. It carries out the reaction tRNA(His) + L-histidine + ATP = L-histidyl-tRNA(His) + AMP + diphosphate + H(+). In Cereibacter sphaeroides (strain ATCC 17023 / DSM 158 / JCM 6121 / CCUG 31486 / LMG 2827 / NBRC 12203 / NCIMB 8253 / ATH 2.4.1.) (Rhodobacter sphaeroides), this protein is Histidine--tRNA ligase.